We begin with the raw amino-acid sequence, 302 residues long: tRNA dimethylallyltransferase (302 aa).

Residue 2–9 coordinates ATP; sequence GPTACGKS. 4–9 is a binding site for substrate; sequence TACGKS. 2 interaction with substrate tRNA regions span residues 27 to 30 and 149 to 153; these read DSAL and QRLIR.

Belongs to the IPP transferase family. As to quaternary structure, monomer. The cofactor is Mg(2+).

The enzyme catalyses adenosine(37) in tRNA + dimethylallyl diphosphate = N(6)-dimethylallyladenosine(37) in tRNA + diphosphate. Functionally, catalyzes the transfer of a dimethylallyl group onto the adenine at position 37 in tRNAs that read codons beginning with uridine, leading to the formation of N6-(dimethylallyl)adenosine (i(6)A). The sequence is that of tRNA dimethylallyltransferase from Buchnera aphidicola subsp. Acyrthosiphon pisum (strain 5A).